The primary structure comprises 123 residues: Protein Wnt-3b (123 aa).

Ser-1 is lipidated: O-palmitoleoyl serine; by PORCN. Cys-89 and Cys-104 are joined by a disulfide. The N-linked (GlcNAc...) asparagine glycan is linked to Asn-90.

The protein belongs to the Wnt family. In terms of processing, palmitoleoylation is required for efficient binding to frizzled receptors. Depalmitoleoylation leads to Wnt signaling pathway inhibition.

The protein resides in the secreted. It localises to the extracellular space. Its subcellular location is the extracellular matrix. Functionally, ligand for members of the frizzled family of seven transmembrane receptors. Probable developmental protein. May be a signaling molecule which affects the development of discrete regions of tissues. Is likely to signal over only few cell diameters. This is Protein Wnt-3b (WNT-3B) from Plethodon jordani (Red-cheeked salamander).